Consider the following 82-residue polypeptide: Small ribosomal subunit protein bS16 (82 aa).

It belongs to the bacterial ribosomal protein bS16 family.

The protein is Small ribosomal subunit protein bS16 of Erwinia tasmaniensis (strain DSM 17950 / CFBP 7177 / CIP 109463 / NCPPB 4357 / Et1/99).